The following is a 206-amino-acid chain: Large ribosomal subunit protein uL3 (206 aa).

The interval Gly-116–Pro-149 is disordered.

It belongs to the universal ribosomal protein uL3 family. As to quaternary structure, part of the 50S ribosomal subunit. Forms a cluster with proteins L14 and L19.

In terms of biological role, one of the primary rRNA binding proteins, it binds directly near the 3'-end of the 23S rRNA, where it nucleates assembly of the 50S subunit. The protein is Large ribosomal subunit protein uL3 of Shouchella clausii (strain KSM-K16) (Alkalihalobacillus clausii).